The sequence spans 529 residues: Tyrosine--tRNA ligase, cytoplasmic (529 aa).

Tyrosine 39 contacts L-tyrosine. The 'HIGH' region signature appears at 44-52; that stretch reads TTGKPHVAY. Residues tyrosine 166, glutamine 170, aspartate 173, and glutamine 188 each coordinate L-tyrosine. The short motif at 222–226 is the 'KMSKS' region element; it reads KMSSS. The short motif at 242 to 247 is the Nuclear localization signal element; sequence KKKLKK. The segment at 335–362 is disordered; sequence KLTSSAYPEPSKNKGGVKGNPKQTTDDD. Residues 365–469 form the tRNA-binding domain; it reads IPSRLDIRVG…EGSAAGDRVY (105 aa).

It belongs to the class-I aminoacyl-tRNA synthetase family. In terms of assembly, homodimer.

Its subcellular location is the cytoplasm. The protein resides in the nucleus. The catalysed reaction is tRNA(Tyr) + L-tyrosine + ATP = L-tyrosyl-tRNA(Tyr) + AMP + diphosphate + H(+). Its function is as follows. Catalyzes the attachment of tyrosine to tRNA(Tyr) in a two-step reaction: tyrosine is first activated by ATP to form Tyr-AMP and then transferred to the acceptor end of tRNA(Tyr). This is Tyrosine--tRNA ligase, cytoplasmic (yars1) from Danio rerio (Zebrafish).